A 396-amino-acid polypeptide reads, in one-letter code: Elongation factor Tu (396 aa).

A tr-type G domain is found at 10-206 (KLHVNVGTIG…ALDTHIPNPE (197 aa)). The segment at 19–26 (GHVDHGKT) is G1. 19-26 (GHVDHGKT) lines the GTP pocket. Position 26 (T26) interacts with Mg(2+). A G2 region spans residues 60-64 (GITIS). Positions 81-84 (DCPG) are G3. GTP contacts are provided by residues 81-85 (DCPGH) and 136-139 (NKAD). The tract at residues 136–139 (NKAD) is G4. The segment at 174–176 (SAL) is G5.

This sequence belongs to the TRAFAC class translation factor GTPase superfamily. Classic translation factor GTPase family. EF-Tu/EF-1A subfamily. In terms of assembly, monomer.

It localises to the cytoplasm. It catalyses the reaction GTP + H2O = GDP + phosphate + H(+). In terms of biological role, GTP hydrolase that promotes the GTP-dependent binding of aminoacyl-tRNA to the A-site of ribosomes during protein biosynthesis. The chain is Elongation factor Tu from Xylella fastidiosa (strain Temecula1 / ATCC 700964).